The primary structure comprises 463 residues: Proton-coupled folate transporter (463 aa).

Over 1 to 27 (MVSPDDSPEIRDRPRPRRCLLPASVTV) the chain is Cytoplasmic. Residues 28 to 46 (EPVIFLSMFALALQGPLAT) traverse the membrane as a helical segment. At 47-86 (QYLWDRLSADIGFNGTRTVGCAMNGSKSAGPEQQEVETLT) the chain is on the extracellular side. Residues asparagine 60 and asparagine 70 are each glycosylated (N-linked (GlcNAc...) asparagine). An intrachain disulfide couples cysteine 67 to cysteine 302. A helical membrane pass occupies residues 87-112 (AHWSLYINLGGFLVGLFSVMLLGPWS). The Cytoplasmic segment spans residues 113–116 (DKVG). Residues 117 to 139 (RRPVLMLPCIGLALQAAVYLLVM) traverse the membrane as a helical segment. The Extracellular segment spans residues 140-144 (YQELH). Residues 145–158 (VGYFLIGRFISGIS) form a helical membrane-spanning segment. The Cytoplasmic portion of the chain corresponds to 159 to 181 (GDFNMILAGCFAYIADVSDRQSR). Positions 160 and 189 each coordinate H(+). Residues 182-207 (TFRVAVLEACLGIAGMVASIIGGHWR) traverse the membrane as a helical segment. Residues 208-212 (KAQGY) are Extracellular-facing. The helical transmembrane segment at 213-231 (INPFWLVFAVNLFTALYVY) threads the bilayer. Topologically, residues 232 to 270 (FCVEESVKDKKPARLFTHRHYQSFFRLFTVQGENNRRRK) are cytoplasmic. Residues 271–293 (LFLYSLALLVVVTVHMGAKNLFV) traverse the membrane as a helical segment. Histidine 285 is a binding site for H(+). Topologically, residues 294-306 (LYELSYPLCWDSD) are extracellular. The chain crosses the membrane as a helical span at residues 307-329 (LIGYGSAAEHLTYLSSLAGLRLF). Over 330-335 (QLCLAD) the chain is Cytoplasmic. The helical transmembrane segment at 336 to 355 (SWVAEMGFISNISGLVVISL) threads the bilayer. At 356–359 (ASTT) the chain is on the extracellular side. The helical transmembrane segment at 360-380 (PIMFTGYGLRFFAMATTPVIR) threads the bilayer. At 381–392 (SKLSKMVEEGEQ) the chain is on the cytoplasmic side. A helical membrane pass occupies residues 393-418 (GALFSSVACVEGLSFLLATGLFNSLY). Topologically, residues 419–426 (PATLHFMK) are extracellular. A helical membrane pass occupies residues 427–445 (GFPFLLGALLLLIPAGIIG). Topologically, residues 446-463 (LIEVCEQKPMYSQFSEIS) are cytoplasmic.

This sequence belongs to the major facilitator superfamily. SLC46A family. As to quaternary structure, monomer.

It is found in the cell membrane. It localises to the apical cell membrane. The protein localises to the basolateral cell membrane. Its subcellular location is the endosome membrane. The protein resides in the cytoplasm. The enzyme catalyses folate(in) + H(+)(in) = folate(out) + H(+)(out). The catalysed reaction is (6S)-5-methyl-5,6,7,8-tetrahydrofolate(in) + H(+)(in) = (6S)-5-methyl-5,6,7,8-tetrahydrofolate(out) + H(+)(out). It carries out the reaction methotrexate(in) + H(+)(in) = methotrexate(out) + H(+)(out). It catalyses the reaction pemetrexed(in) + H(+)(in) = pemetrexed(out) + H(+)(out). Functionally, proton-coupled folate symporter that mediates folate absorption using an H(+) gradient as a driving force. Involved in the intestinal absorption of folates at the brush-border membrane of the proximal jejunum, and the transport from blood to cerebrospinal fluid across the choroid plexus. Functions at acidic pH via alternate outward- and inward-open conformation states. Protonation of residues in the outward open state primes the protein for transport. Binding of folate promotes breaking of salt bridge network and subsequent closure of the extracellular gate, leading to the inward-open state and release of protons and folate. Also able to transport antifolate drugs, such as methotrexate and pemetrexed. Also acts as a lower-affinity, pH-independent heme carrier protein and constitutes the main importer of heme in the intestine. Imports heme in the retina and retinal pigment epithelium, in neurons of the hippocampus, in hepatocytes and in the renal epithelial cells. This chain is Proton-coupled folate transporter, found in Xenopus laevis (African clawed frog).